The primary structure comprises 545 residues: Methionine--tRNA ligase (545 aa).

The 'HIGH' region signature appears at 15–25 (PYANGPIHLGH). Residues C146, C149, C159, and C162 each contribute to the Zn(2+) site. The short motif at 332–336 (KMSKS) is the 'KMSKS' region element. K335 is a binding site for ATP.

It belongs to the class-I aminoacyl-tRNA synthetase family. MetG type 1 subfamily. Monomer. Zn(2+) serves as cofactor.

The protein resides in the cytoplasm. The enzyme catalyses tRNA(Met) + L-methionine + ATP = L-methionyl-tRNA(Met) + AMP + diphosphate. In terms of biological role, is required not only for elongation of protein synthesis but also for the initiation of all mRNA translation through initiator tRNA(fMet) aminoacylation. In Hamiltonella defensa subsp. Acyrthosiphon pisum (strain 5AT), this protein is Methionine--tRNA ligase.